Consider the following 483-residue polypeptide: 6-phosphogluconate dehydrogenase, decarboxylating 1 (483 aa).

Residues 11–16, 34–36, 78–80, and N106 each bind NADP(+); these read GLAVMG, NRT, and VKA. Substrate is bound by residues N106 and 132-134; that span reads SGG. The Proton acceptor role is filled by K186. Residue 189-190 coordinates substrate; that stretch reads HN. Residue E193 is the Proton donor of the active site. 5 residues coordinate substrate: Y194, K264, R291, R454, and H460.

This sequence belongs to the 6-phosphogluconate dehydrogenase family. Homodimer.

The protein resides in the cytoplasm. It catalyses the reaction 6-phospho-D-gluconate + NADP(+) = D-ribulose 5-phosphate + CO2 + NADPH. It functions in the pathway carbohydrate degradation; pentose phosphate pathway; D-ribulose 5-phosphate from D-glucose 6-phosphate (oxidative stage): step 3/3. Catalyzes the oxidative decarboxylation of 6-phosphogluconate to ribulose 5-phosphate and CO(2), with concomitant reduction of NADP to NADPH. This chain is 6-phosphogluconate dehydrogenase, decarboxylating 1 (pgdC), found in Spinacia oleracea (Spinach).